The sequence spans 332 residues: T-cell surface glycoprotein CD1c3 (332 aa).

The N-terminal stretch at 1–17 is a signal peptide; sequence MLFLQFLFLDVVLGGSI. Residues 18–300 are Extracellular-facing; that stretch reads TKNVVQENIS…IILYWGHGLS (283 aa). N-linked (GlcNAc...) asparagine glycans are attached at residues N25, N38, N75, and N146. Disulfide bonds link C120/C184 and C224/C279. One can recognise an Ig-like domain in the interval 205–292; sequence PEVWLSSSPN…HSSLRDQDII (88 aa). The chain crosses the membrane as a helical span at residues 301 to 321; the sequence is VILITFAVIVPLVLLIILVLL. The Cytoplasmic portion of the chain corresponds to 322-332; sequence CKKCCTYQGIP.

Heterodimer with B2M (beta-2-microglobulin).

It localises to the cell membrane. It is found in the endosome membrane. In terms of biological role, antigen-presenting protein that binds self and non-self lipid and glycolipid antigens and presents them to T-cell receptors on natural killer T-cells. This is T-cell surface glycoprotein CD1c3 (CD1C3) from Cavia porcellus (Guinea pig).